Here is a 438-residue protein sequence, read N- to C-terminus: Aspartate--tRNA(Asp) ligase (438 aa).

Residue Glu-170 coordinates L-aspartate. The interval 192 to 195 (QLYK) is aspartate. Arg-214 serves as a coordination point for L-aspartate. ATP contacts are provided by residues 214–216 (RAE), 222–224 (RHL), and Glu-361. Mg(2+)-binding residues include Glu-361 and Ser-364. Residues Ser-364 and Arg-368 each coordinate L-aspartate. 409–412 (GAER) contacts ATP.

Belongs to the class-II aminoacyl-tRNA synthetase family. Type 2 subfamily. As to quaternary structure, homodimer. Requires Mg(2+) as cofactor.

The protein localises to the cytoplasm. The enzyme catalyses tRNA(Asp) + L-aspartate + ATP = L-aspartyl-tRNA(Asp) + AMP + diphosphate. Functionally, catalyzes the attachment of L-aspartate to tRNA(Asp) in a two-step reaction: L-aspartate is first activated by ATP to form Asp-AMP and then transferred to the acceptor end of tRNA(Asp). This chain is Aspartate--tRNA(Asp) ligase, found in Pyrococcus furiosus (strain ATCC 43587 / DSM 3638 / JCM 8422 / Vc1).